A 427-amino-acid polypeptide reads, in one-letter code: MMPSESGAESLEQPAAQVGTGAASAVATAGAAGGGPDPEASSASLGRHQSRLSWPQVKRLDALLKEPIPIHGRGNFPTLSVQPQQIVQVVRSSLEEHGLRVHSVRLHGSAASHVLHPESGLGYKDLDLVFQMDLRSEVSFQLTKAVVLACLLDFLPAGVSRAKITPLTLKEAYVQKLVKVCTDLDRWSLISLSNKSGKNVELKFVDSVRRQFEFSIDSFQIILDSLLLFGQCSSTPMSEAFHPTVTGESLYGDFAEALEHLQHRVIATRSPEEIRGGGLLKYCHLLVRGFRPRPSTDVRALQRYMCSRFFIDFPDLVEQRRILERYLEAHFGGAEAARRYACLVTLHQVVNESTVCLMSHERRQTLDLIAMLALQALAEQGPAAMAALAWRRPGSDGVVPATVNYYVTPMQPLLPRAHSYPTWLPCN.

The tract at residues Met1–Gln49 is disordered. The span at Ala15–Gly30 shows a compositional bias: low complexity.

The protein belongs to the TENT family.

The protein resides in the cytoplasm. It is found in the nucleus. The enzyme catalyses RNA(n) + ATP = RNA(n)-3'-adenine ribonucleotide + diphosphate. Its function is as follows. Catalyzes the transfer of one adenosine molecule from an ATP to an mRNA poly(A) tail bearing a 3'-OH terminal group in an ATP hydrolysis-dependent manner. May be involved in maintaining the translation efficiency of at least some genes through preventing degradation of their mRNAs. Prefers RNA molecules that are adenosine-rich close to 3'-end. In addition, may inhibit cell proliferation and cell cycle progression through ubiquitination of beta-catenin/CTNNB1. This chain is Terminal nucleotidyltransferase 5B, found in Mus musculus (Mouse).